Reading from the N-terminus, the 599-residue chain is Fructan 1-exohydrolase (599 aa).

A signal peptide spans 1 to 16 (MAQAWAFLLLPALALA). Residue Asp78 is part of the active site. Residues Asn171, Asn239, and Asn251 are each glycosylated (N-linked (GlcNAc...) asparagine). A disulfide bridge connects residues Cys449 and Cys495.

This sequence belongs to the glycosyl hydrolase 32 family.

It carries out the reaction Hydrolysis of terminal, non-reducing (2-&gt;1)-linked beta-D-fructofuranose residues in fructans.. Its activity is regulated as follows. Inhibited by sucrose. Functionally, hydrolyzes inulin-type beta-(2,1)-fructans. May play a role as a beta-(2,1)-trimmer during graminan biosynthesis. The polypeptide is Fructan 1-exohydrolase (Hordeum vulgare (Barley)).